Consider the following 707-residue polypeptide: Protein kinase C theta type (707 aa).

Residues 1-107 (MSPFLRIGLS…KNNGRTEIWL (107 aa)) enclose the C2 domain. Phosphotyrosine; by LCK is present on tyrosine 90. Residues 159 to 209 (CHEFTATFFPQPTFCSVCHEFVWGLNKQGYQCRQCNAAIHKKCIDKVIAKC) form a Phorbol-ester/DAG-type 1 zinc finger. Residue threonine 219 is modified to Phosphothreonine; by autocatalysis. A Phorbol-ester/DAG-type 2 zinc finger spans residues 231–281 (PHRFKVYNYKSPTFCEHCGTLLWGLARQGLKCDACGMNVHHRCQTKVANLC). Positions 327-365 (ETRPPCVPTPGKREPQGISWDSPLDGSNKSAGPPEPEVS) are disordered. Position 348 is a phosphoserine (serine 348). Residues 380–634 (FILHKMLGKG…RGDIRQHPLF (255 aa)) enclose the Protein kinase domain. ATP-binding positions include 386-394 (LGKGSFGKV) and lysine 409. The Proton acceptor role is filled by aspartate 504. Threonine 538 bears the Phosphothreonine; by PDPK1 mark. In terms of domain architecture, AGC-kinase C-terminal spans 635-706 (REINWEELER…INPGMETLIC (72 aa)). Serine 676 is modified (phosphoserine; by autocatalysis). Residue serine 685 is modified to Phosphoserine. The residue at position 695 (serine 695) is a Phosphoserine; by autocatalysis.

It belongs to the protein kinase superfamily. AGC Ser/Thr protein kinase family. PKC subfamily. As to quaternary structure, part of a membrane raft complex composed at least of BCL10, CARD11, MALT1 and IKBKB. Interacts with GLRX3 (via N-terminus). Interacts with ECT2. Interacts with CCDC88A/GIV; the interaction leads to phosphorylation of CCDC88A and inhibition of its guanine nucleotide exchange factor activity. Interacts with CD28. The cofactor is Mg(2+). Post-translationally, autophosphorylation at Thr-219 is required for targeting to the TCR and cellular function of PRKCQ upon antigen receptor ligation. Following TCR stimulation, phosphorylated at Tyr-90 and Ser-685. In terms of tissue distribution, T-lymphocytes and skeletal muscle.

It localises to the cytoplasm. The protein localises to the cell membrane. The catalysed reaction is L-seryl-[protein] + ATP = O-phospho-L-seryl-[protein] + ADP + H(+). The enzyme catalyses L-threonyl-[protein] + ATP = O-phospho-L-threonyl-[protein] + ADP + H(+). With respect to regulation, novel PKCs (PRKCD, PRKCE, PRKCH and PRKCQ) are calcium-insensitive, but activated by diacylglycerol (DAG) and phosphatidylserine. Three specific sites; Thr-538 (activation loop of the kinase domain), Ser-676 (turn motif) and Ser-695 (hydrophobic region), need to be phosphorylated for its full activation. Calcium-independent, phospholipid- and diacylglycerol (DAG)-dependent serine/threonine-protein kinase that mediates non-redundant functions in T-cell receptor (TCR) signaling, including T-cells activation, proliferation, differentiation and survival, by mediating activation of multiple transcription factors such as NF-kappa-B, JUN, NFATC1 and NFATC2. In TCR-CD3/CD28-co-stimulated T-cells, is required for the activation of NF-kappa-B and JUN, which in turn are essential for IL2 production, and participates in the calcium-dependent NFATC1 and NFATC2 transactivation. Mediates the activation of the canonical NF-kappa-B pathway (NFKB1) by direct phosphorylation of CARD11 on several serine residues, inducing CARD11 association with lipid rafts and recruitment of the BCL10-MALT1 complex, which then activates IKK complex, resulting in nuclear translocation and activation of NFKB1. May also play an indirect role in activation of the non-canonical NF-kappa-B (NFKB2) pathway. In the signaling pathway leading to JUN activation, acts by phosphorylating the mediator STK39/SPAK and may not act through MAP kinases signaling. Plays a critical role in TCR/CD28-induced NFATC1 and NFATC2 transactivation by participating in the regulation of reduced inositol 1,4,5-trisphosphate generation and intracellular calcium mobilization. After costimulation of T-cells through CD28 can phosphorylate CBLB and is required for the ubiquitination and subsequent degradation of CBLB, which is a prerequisite for the activation of TCR. During T-cells differentiation, plays an important role in the development of T-helper 2 (Th2) cells following immune and inflammatory responses, and, in the development of inflammatory autoimmune diseases, is necessary for the activation of IL17-producing Th17 cells. May play a minor role in Th1 response. Upon TCR stimulation, mediates T-cell protective survival signal by phosphorylating BAD, thus protecting T-cells from BAD-induced apoptosis, and by up-regulating BCL-X(L)/BCL2L1 levels through NF-kappa-B and JUN pathways. In platelets, regulates signal transduction downstream of the ITGA2B, CD36/GP4, F2R/PAR1 and F2RL3/PAR4 receptors, playing a positive role in 'outside-in' signaling and granule secretion signal transduction. May relay signals from the activated ITGA2B receptor by regulating the uncoupling of WASP and WIPF1, thereby permitting the regulation of actin filament nucleation and branching activity of the Arp2/3 complex. May mediate inhibitory effects of free fatty acids on insulin signaling by phosphorylating IRS1, which in turn blocks IRS1 tyrosine phosphorylation and downstream activation of the PI3K/AKT pathway. Phosphorylates MSN (moesin) in the presence of phosphatidylglycerol or phosphatidylinositol. Phosphorylates PDPK1 at 'Ser-504' and 'Ser-532' and negatively regulates its ability to phosphorylate PKB/AKT1. Phosphorylates CCDC88A/GIV and inhibits its guanine nucleotide exchange factor activity. Phosphorylates and activates LRRK1, which phosphorylates RAB proteins involved in intracellular trafficking. The polypeptide is Protein kinase C theta type (Prkcq) (Mus musculus (Mouse)).